The following is a 1112-amino-acid chain: Constitutive coactivator of PPAR-gamma-like protein 1 (1112 aa).

An interaction with YES1, SRC and FYN region spans residues 339–403 (PPHYLARPNP…YSLSEPALTL (65 aa)). Positions 372–525 (QAKPAVPQVP…GKGSHMGTVQ (154 aa)) are disordered. Composition is skewed to polar residues over residues 403 to 418 (LDTS…SYSN) and 433 to 445 (SPIN…SPNH). Residues 479–500 (GWEKTGSHAEPLARGDPGDQVK) show a composition bias toward basic and acidic residues. Positions 503–512 (GSSTASSGSQ) are enriched in polar residues. Threonine 653 is modified (phosphothreonine). Positions 827-1112 (AEQAAKVEKM…LEAAVLNKEE (286 aa)) are RNA binding. An omega-N-methylarginine mark is found at arginine 871, arginine 882, and arginine 884. Positions 919-943 (AFSGSDSSRTSKSQGGVQPIPSQGG) are disordered. Over residues 922-934 (GSDSSRTSKSQGG) the composition is skewed to polar residues. Position 930 is an N6-acetyllysine (lysine 930). A Phosphoserine modification is found at serine 958. Omega-N-methylarginine occurs at positions 980 and 984. A phosphoserine mark is found at serine 1021 and serine 1042. The disordered stretch occupies residues 1030-1090 (KSKSGESKSS…PCNTNPHLNA (61 aa)). Residues 1070–1090 (HSESALNNDSKPCNTNPHLNA) show a composition bias toward polar residues.

Belongs to the constitutive coactivator of PPAR-gamma family. Interacts with PURA. Interacts with SRC family protein kinases YES1, SRC and FYN. Upon tyrosine phosphorylation, interacts with PIK3R1. Interacts with IGF2BP1/IMP-1 in an RNA-dependent manner. Post-translationally, arg-980 is dimethylated, probably to asymmetric dimethylarginine. In terms of processing, phosphorylated on tyrosine by src family kinases upon ultraviolet exposure. As to expression, in the brain, predominantly expressed in the hippocampus, caudate putamen, cerebral cortex and cerebellum. Expression is restricted to neurons (at protein level).

The protein localises to the cytoplasm. It is found in the cell membrane. Its function is as follows. Component of the oxidative stress-induced survival signaling. May regulate the activation of SRC family protein kinases. May act as a scaffolding protein enabling SRC family protein kinases to phosphorylate and activate PI3-kinase. Binds IGF2 RNA and promotes the production of IGF2 protein. This is Constitutive coactivator of PPAR-gamma-like protein 1 (FAM120A) from Mus musculus (Mouse).